Consider the following 562-residue polypeptide: Oxygen-dependent choline dehydrogenase (562 aa).

Residue 4–33 (DYIIIGAGSAGNVLATRLTEDPNTSVLLLE) coordinates FAD. Catalysis depends on histidine 473, which acts as the Proton acceptor.

The protein belongs to the GMC oxidoreductase family. FAD serves as cofactor.

It is found in the cell membrane. The enzyme catalyses choline + A = betaine aldehyde + AH2. It catalyses the reaction betaine aldehyde + NAD(+) + H2O = glycine betaine + NADH + 2 H(+). The protein operates within amine and polyamine biosynthesis; betaine biosynthesis via choline pathway; betaine aldehyde from choline (cytochrome c reductase route): step 1/1. Involved in the biosynthesis of the osmoprotectant glycine betaine. Catalyzes the oxidation of choline to betaine aldehyde and betaine aldehyde to glycine betaine at the same rate. The protein is Oxygen-dependent choline dehydrogenase of Escherichia coli O157:H7.